The following is a 545-amino-acid chain: Toxin BC_0920 (545 aa).

Positions 1 to 217 (MSLNMYLGEV…ARQAANSIEE (217 aa)) constitute an LXG domain.

The protein in the N-terminal section; belongs to the LXG family. It in the C-terminal section; belongs to the bacterial EndoU family. Probably interacts with cognate immunity protein BC_0921. The interaction inhibits the toxic activity of BC_0921.

The protein resides in the secreted. Toxic component of an LXG toxin-immunity module. The C-terminus (residues 322-545) has RNase activity in E.coli which is neutralized by cognate immunity protein BC_0921, but not by immunity proteins specific to other toxins with the LXG domain. Degrades 5S rRNA and several tRNAs in vitro; cleavage is endonucleolytic within the anticodon loop for tRNA(GAU-Ile) and tRNA(UUC-Glu) but total for 5S rRNA and at least one other tRNA. RNase activity is suppressed by cognate immunity protein BC_0921. The sequence is that of Toxin BC_0920 from Bacillus cereus (strain ATCC 14579 / DSM 31 / CCUG 7414 / JCM 2152 / NBRC 15305 / NCIMB 9373 / NCTC 2599 / NRRL B-3711).